A 65-amino-acid polypeptide reads, in one-letter code: UPF0337 protein BCE_1081 (65 aa).

Positions 1-28 are disordered; that stretch reads MSGGLKEQITGKVEKTKGQVKEGIGEVT. Residues 12–28 are compositionally biased toward basic and acidic residues; the sequence is KVEKTKGQVKEGIGEVT.

This sequence belongs to the UPF0337 (CsbD) family.

The polypeptide is UPF0337 protein BCE_1081 (Bacillus cereus (strain ATCC 10987 / NRS 248)).